A 199-amino-acid chain; its full sequence is GTP-binding protein Di-Ras2 (199 aa).

GTP-binding positions include 14 to 21, 33 to 39, 61 to 65, and 121 to 124; these read GAGGVGKS, RESYIPT, DTTGS, and NKCD. Ser35 is modified (phosphoserine). The short motif at 36–44 is the Effector region element; the sequence is YIPTVEDTY. Ser126 is subject to Phosphoserine. 152-153 serves as a coordination point for GTP; sequence AK. The residue at position 196 (Cys196) is a Cysteine methyl ester. The S-geranylgeranyl cysteine moiety is linked to residue Cys196. A propeptide spans 197-199 (removed in mature form); the sequence is VIM.

This sequence belongs to the small GTPase superfamily. Di-Ras family. Post-translationally, ubiquitinated by the ECS(ASB11) complex via 'Lys-11'-linked ubiquitin chains, leading to its degradation by the proteasome.

It is found in the cell membrane. The catalysed reaction is GTP + H2O = GDP + phosphate + H(+). Its function is as follows. Displays low GTPase activity and exists predominantly in the GTP-bound form. The sequence is that of GTP-binding protein Di-Ras2 (DIRAS2) from Pongo abelii (Sumatran orangutan).